We begin with the raw amino-acid sequence, 865 residues long: NBPF family member NBPF11 (865 aa).

Residues 70-130 adopt a coiled-coil conformation; it reads MLRNERQFKE…RSLNEHLQAL (61 aa). Residues 161-200 form a disordered region; it reads KLSPENDEDEDEDVQVEEDEKVLESSAPREVQKAEESKVP. The segment covering 165–181 has biased composition (acidic residues); the sequence is ENDEDEDEDVQVEEDEK. Positions 165 to 259 constitute an Olduvai 1 domain; it reads ENDEDEDEDV…GCQDALNILP (95 aa). The span at 190-200 shows a compositional bias: basic and acidic residues; sequence EVQKAEESKVP. A coiled-coil region spans residues 339 to 401; the sequence is KSMLRNERQF…RSLNEHLQAL (63 aa). Olduvai domains are found at residues 436–528, 529–617, 620–675, 676–767, and 770–865; these read ENDN…HIIP, ENES…ATGP, SREL…VDMD, EIEK…PPCP, and SREL…SAAC. Disordered stretches follow at residues 450–475 and 520–567; these read AEKVQKSSSPREMQKAEEKEVPEDSL and WEDA…GYST. Composition is skewed to acidic residues over residues 530–539 and 550–562; these read NESDDEEEEE and ESEEEEVPQESWD. The tract at residues 829-865 is disordered; sequence RGRGRKEGEEDQRRKEEGEEKKGKKIKTHHAPGSAAC. Basic and acidic residues predominate over residues 833 to 850; it reads RKEGEEDQRRKEEGEEKK.

Belongs to the NBPF family. As to expression, expressed in spinal cord.

The protein localises to the cytoplasm. This Homo sapiens (Human) protein is NBPF family member NBPF11.